A 481-amino-acid chain; its full sequence is Phototropic-responsive NPH3 family protein NPY4 (481 aa).

One can recognise a BTB domain in the interval 29–102; sequence TEIIIIIGNV…CYGITVTLNA (74 aa). The 244-residue stretch at 207-450 folds into the NPH3 domain; it reads DWWVEDLCEL…VQVLFFEQIR (244 aa). Tyr391 is modified (phosphotyrosine). The segment at 456–481 is disordered; the sequence is TGYSTPELTTTTLNTEDDEWDHEKEF. Low complexity predominate over residues 460 to 469; sequence TPELTTTTLN.

It belongs to the NPH3 family. In terms of tissue distribution, expressed in the hypocotyl cells that would differentiate into vascular bundles. Highly expressed in primary root tips and radicles.

It is found in the cell membrane. Its subcellular location is the cytoplasm. It localises to the cytosol. It participates in protein modification; protein ubiquitination. Its function is as follows. May act as a substrate-specific adapter of an E3 ubiquitin-protein ligase complex (CUL3-RBX1-BTB) which mediates the ubiquitination and subsequent proteasomal degradation of target proteins. Plays an essential role in auxin-mediated organogenesis and in root gravitropic responses through the control of PIN proteins (e.g. PIN1 and PIN2) polarity in the root tip endodermal cell layer and in shoot epidermis. Recruited to the plasma membrane by PINs (e.g. PIN1 and PIN2) and, in concert with AGC kinases-mediated (e.g. D6PK and PID) PINs phosphorylation, maintains their polarity through limiting lateral diffusion-based escape. This is Phototropic-responsive NPH3 family protein NPY4 from Arabidopsis thaliana (Mouse-ear cress).